The following is a 174-amino-acid chain: Glycine-rich protein 5 (174 aa).

Residues M1 to A22 form the signal peptide.

Mostly expressed in immature seed pods, and, to a lower extent, in stems and leaves. Present in phloem and epiderm in leaves, stems, flowers and fruits.

Its subcellular location is the vacuole. Its function is as follows. Involved in organ growth by promoting cell elongation processes. In Arabidopsis thaliana (Mouse-ear cress), this protein is Glycine-rich protein 5.